Reading from the N-terminus, the 483-residue chain is Threonine synthase-like 2 (483 aa).

The residue at position 113 (lysine 113) is an N6-(pyridoxal phosphate)lysine.

Belongs to the threonine synthase family. Requires pyridoxal 5'-phosphate as cofactor.

Functionally, acts as a catabolic phospho-lyase on both gamma- and beta-phosphorylated substrates. Degrades O-phospho-threonine (PThr) to alpha-ketobutyrate, ammonia and phosphate. Also degrades O-phospho-homoserine (PHS), but this is not its physiological substrate. In Mus musculus (Mouse), this protein is Threonine synthase-like 2 (Thnsl2).